Consider the following 109-residue polypeptide: MFTKGGLGNLMKQAQQMQEKMAKIQEEIAQMEVTGEAGAGLVKVTINGAHNCRRVEVDPSLLQDDKDMLEDLAAAAFNDATRRISEVQKKKMSAISTGMQLPNGFNMPV.

This sequence belongs to the YbaB/EbfC family. Homodimer.

It localises to the cytoplasm. Its subcellular location is the nucleoid. Binds to DNA and alters its conformation. May be involved in regulation of gene expression, nucleoid organization and DNA protection. This chain is Nucleoid-associated protein BU482, found in Buchnera aphidicola subsp. Acyrthosiphon pisum (strain APS) (Acyrthosiphon pisum symbiotic bacterium).